Reading from the N-terminus, the 383-residue chain is 4-hydroxy-3-methylbut-2-en-1-yl diphosphate synthase (flavodoxin) (383 aa).

Residues C277, C280, C312, and E319 each coordinate [4Fe-4S] cluster.

Belongs to the IspG family. Requires [4Fe-4S] cluster as cofactor.

It catalyses the reaction (2E)-4-hydroxy-3-methylbut-2-enyl diphosphate + oxidized [flavodoxin] + H2O + 2 H(+) = 2-C-methyl-D-erythritol 2,4-cyclic diphosphate + reduced [flavodoxin]. The protein operates within isoprenoid biosynthesis; isopentenyl diphosphate biosynthesis via DXP pathway; isopentenyl diphosphate from 1-deoxy-D-xylulose 5-phosphate: step 5/6. Its function is as follows. Converts 2C-methyl-D-erythritol 2,4-cyclodiphosphate (ME-2,4cPP) into 1-hydroxy-2-methyl-2-(E)-butenyl 4-diphosphate. This Caulobacter vibrioides (strain ATCC 19089 / CIP 103742 / CB 15) (Caulobacter crescentus) protein is 4-hydroxy-3-methylbut-2-en-1-yl diphosphate synthase (flavodoxin).